The sequence spans 237 residues: Ergosterol biosynthesis protein 29 (237 aa).

Residues 36–56 form a helical membrane-spanning segment; it reads ITLFLIVVGTLAFFNELYITI.

It is found in the endoplasmic reticulum membrane. In terms of biological role, part of the third module of ergosterol biosynthesis pathway that includes the late steps of the pathway. ERG29 regulates the activity of the iron-containing C4-methylsterol oxidase ERG25. The third module or late pathway involves the ergosterol synthesis itself through consecutive reactions that mainly occur in the endoplasmic reticulum (ER) membrane. Firstly, the squalene synthase ERG9 catalyzes the condensation of 2 farnesyl pyrophosphate moieties to form squalene, which is the precursor of all steroids. Squalene synthase is crucial for balancing the incorporation of farnesyl diphosphate (FPP) into sterol and nonsterol isoprene synthesis. Secondly, the squalene epoxidase ERG1 catalyzes the stereospecific oxidation of squalene to (S)-2,3-epoxysqualene, which is considered to be a rate-limiting enzyme in steroid biosynthesis. Then, the lanosterol synthase ERG7 catalyzes the cyclization of (S)-2,3 oxidosqualene to lanosterol, a reaction that forms the sterol core. In the next steps, lanosterol is transformed to zymosterol through a complex process involving various demethylation, reduction and desaturation reactions. The lanosterol 14-alpha-demethylase ERG11 (also known as CYP51) catalyzes C14-demethylation of lanosterol to produce 4,4'-dimethyl cholesta-8,14,24-triene-3-beta-ol, which is critical for ergosterol biosynthesis. The C-14 reductase ERG24 reduces the C14=C15 double bond of 4,4-dimethyl-cholesta-8,14,24-trienol to produce 4,4-dimethyl-cholesta-8,24-dienol. 4,4-dimethyl-cholesta-8,24-dienol is substrate of the C-4 demethylation complex ERG25-ERG26-ERG27 in which ERG25 catalyzes the three-step monooxygenation required for the demethylation of 4,4-dimethyl and 4alpha-methylsterols, ERG26 catalyzes the oxidative decarboxylation that results in a reduction of the 3-beta-hydroxy group at the C-3 carbon to an oxo group, and ERG27 is responsible for the reduction of the keto group on the C-3. ERG28 has a role as a scaffold to help anchor ERG25, ERG26 and ERG27 to the endoplasmic reticulum and ERG29 regulates the activity of the iron-containing C4-methylsterol oxidase ERG25. Then, the sterol 24-C-methyltransferase ERG6 catalyzes the methyl transfer from S-adenosyl-methionine to the C-24 of zymosterol to form fecosterol. The C-8 sterol isomerase ERG2 catalyzes the reaction which results in unsaturation at C-7 in the B ring of sterols and thus converts fecosterol to episterol. The sterol-C5-desaturase ERG3 then catalyzes the introduction of a C-5 double bond in the B ring to produce 5-dehydroepisterol. The C-22 sterol desaturase ERG5 further converts 5-dehydroepisterol into ergosta-5,7,22,24(28)-tetraen-3beta-ol by forming the C-22(23) double bond in the sterol side chain. Finally, ergosta-5,7,22,24(28)-tetraen-3beta-ol is substrate of the C-24(28) sterol reductase ERG4 to produce ergosterol. Functionally, plays a role in maintaining mitochondrial and plasma membrane integrity and consequently impacting the iron homeostasis, respiratory metabolism and antioxidant response. The sequence is that of Ergosterol biosynthesis protein 29 from Saccharomyces cerevisiae (strain ATCC 204508 / S288c) (Baker's yeast).